A 358-amino-acid polypeptide reads, in one-letter code: DNA polymerase IV (358 aa).

The 182-residue stretch at 4–185 (IIHIDMDCYF…LSLRKIPGVG (182 aa)) folds into the UmuC domain. Mg(2+) is bound by residues aspartate 8 and aspartate 103. The active site involves glutamate 104.

This sequence belongs to the DNA polymerase type-Y family. Monomer. Requires Mg(2+) as cofactor.

Its subcellular location is the cytoplasm. The enzyme catalyses DNA(n) + a 2'-deoxyribonucleoside 5'-triphosphate = DNA(n+1) + diphosphate. Poorly processive, error-prone DNA polymerase involved in untargeted mutagenesis. Copies undamaged DNA at stalled replication forks, which arise in vivo from mismatched or misaligned primer ends. These misaligned primers can be extended by PolIV. Exhibits no 3'-5' exonuclease (proofreading) activity. May be involved in translesional synthesis, in conjunction with the beta clamp from PolIII. In Shewanella sp. (strain W3-18-1), this protein is DNA polymerase IV.